We begin with the raw amino-acid sequence, 116 residues long: Large ribosomal subunit protein uL18 (116 aa).

Belongs to the universal ribosomal protein uL18 family. In terms of assembly, part of the 50S ribosomal subunit; part of the 5S rRNA/L5/L18/L25 subcomplex. Contacts the 5S and 23S rRNAs.

Functionally, this is one of the proteins that bind and probably mediate the attachment of the 5S RNA into the large ribosomal subunit, where it forms part of the central protuberance. This is Large ribosomal subunit protein uL18 from Alcanivorax borkumensis (strain ATCC 700651 / DSM 11573 / NCIMB 13689 / SK2).